An 809-amino-acid chain; its full sequence is Phenylalanine--tRNA ligase beta subunit (809 aa).

Positions 39 to 153 constitute a tRNA-binding domain; it reads APPFSQIVVG…EDTPVGADIR (115 aa). In terms of domain architecture, B5 spans 404 to 479; it reads PKREPVRMRV…RIYGFEQIPA (76 aa). Asp-457, Asp-463, Glu-466, and Glu-467 together coordinate Mg(2+). One can recognise an FDX-ACB domain in the interval 706-808; sequence PRVPAVTRDI…AGDAFGARLR (103 aa).

Belongs to the phenylalanyl-tRNA synthetase beta subunit family. Type 1 subfamily. In terms of assembly, tetramer of two alpha and two beta subunits. Requires Mg(2+) as cofactor.

It is found in the cytoplasm. The enzyme catalyses tRNA(Phe) + L-phenylalanine + ATP = L-phenylalanyl-tRNA(Phe) + AMP + diphosphate + H(+). This chain is Phenylalanine--tRNA ligase beta subunit, found in Ralstonia nicotianae (strain ATCC BAA-1114 / GMI1000) (Ralstonia solanacearum).